Reading from the N-terminus, the 476-residue chain is MAIRIYNTLTRQKEEFKPLHEGEVRMYVCGPTVYDYPHLGHARTYIAFDVIRRYLEHKGYTVLMVMNFTDIDDKIIKRANETGEDPKELAEKFLRIFLEDMKALKVKPADIYPRVTEHMQDIISFIKKLQEKGYAYEGSDGVYFEVRKFKDYGKLSKIKLEDLVKGARVEPGEGKRNPEDFALWKKAKPGEPKWESPWGEGRPGWHIECSTMSSKYLGESFDIHGGGNDLIFPHHENEIAQSEACFGHEWVHYWMHTGFLMVNGEKMSKSLGNFVTVRELLKRYNPEVIRLFVLQRHYRSPLDYSEEGIEHAKNNLERLYNTLENIRVAMSKAEISFRWDEPEFRAYEAIRDARKKFYEAMDDDFNTAEALKAVFEVSNAINRYLTEVEKPKESILRKAWEFFKDVGEVFGLFEDYFKEQKAENDEELINLLVEVRAQLRKEKKFDLADKIREELRKLGIQLEDTPQGTVWKRIKV.

Cys-29 provides a ligand contact to Zn(2+). Positions 31–41 match the 'HIGH' region motif; the sequence is PTVYDYPHLGH. Cys-209, His-234, and Glu-238 together coordinate Zn(2+). Residues 266–270 carry the 'KMSKS' region motif; sequence KMSKS. Lys-269 contacts ATP.

Belongs to the class-I aminoacyl-tRNA synthetase family. Zn(2+) serves as cofactor.

The protein resides in the cytoplasm. The catalysed reaction is tRNA(Cys) + L-cysteine + ATP = L-cysteinyl-tRNA(Cys) + AMP + diphosphate. In Thermococcus gammatolerans (strain DSM 15229 / JCM 11827 / EJ3), this protein is Cysteine--tRNA ligase.